We begin with the raw amino-acid sequence, 463 residues long: Succinate--CoA ligase [ADP-forming] subunit beta, mitochondrial (463 aa).

The transit peptide at 1–52 directs the protein to the mitochondrion; sequence MAASMFYGRLVAVATLRNHRPRTAQRAAAQVLGSSGLFNNHGLQVQQQQQRN. The 228-residue stretch at 61-288 folds into the ATP-grasp domain; that stretch reads MELLQEAGVS…SNSAYRQKKI (228 aa). The residue at position 78 (lysine 78) is an N6-acetyllysine. A Phosphotyrosine modification is found at tyrosine 84. Lysine 88 is subject to N6-acetyllysine; alternate. Lysine 88 is subject to N6-succinyllysine; alternate. ATP is bound by residues lysine 98 and 105–107; that span reads GRG. Lysine 129, lysine 139, lysine 143, and lysine 216 each carry N6-acetyllysine. Mg(2+)-binding residues include asparagine 258 and aspartate 272. Serine 279 bears the Phosphoserine mark. Asparagine 323 contributes to the substrate binding site. Threonine 341 is modified (phosphothreonine). Lysine 368 is subject to N6-acetyllysine. Residue 380 to 382 participates in substrate binding; sequence GIM.

Belongs to the succinate/malate CoA ligase beta subunit family. ATP-specific subunit beta subfamily. Heterodimer of an alpha and a beta subunit. The beta subunit determines specificity for ATP. Interacts with ALAS2. The cofactor is Mg(2+). Widely expressed. Not expressed in liver and lung.

It localises to the mitochondrion. It carries out the reaction succinate + ATP + CoA = succinyl-CoA + ADP + phosphate. It functions in the pathway carbohydrate metabolism; tricarboxylic acid cycle; succinate from succinyl-CoA (ligase route): step 1/1. Inhibited by itaconate. ATP-specific succinyl-CoA synthetase functions in the citric acid cycle (TCA), coupling the hydrolysis of succinyl-CoA to the synthesis of ATP and thus represents the only step of substrate-level phosphorylation in the TCA. The beta subunit provides nucleotide specificity of the enzyme and binds the substrate succinate, while the binding sites for coenzyme A and phosphate are found in the alpha subunit. The polypeptide is Succinate--CoA ligase [ADP-forming] subunit beta, mitochondrial (Homo sapiens (Human)).